We begin with the raw amino-acid sequence, 1377 residues long: Hemoglobin-binding protease hbp autotransporter (1377 aa).

An N-terminal signal peptide occupies residues 1–52 (MNRIYSLRYSAVARGFIAVSEFARKCVHKSVRRLCFPVLLLIPVLFSAGSLA). In terms of domain architecture, Peptidase S6 spans 53–302 (GTVNNELGYQ…AVIPLDFIGQ (250 aa)). Residues H125, D153, and S259 each act as charge relay system in the active site. Residues 1111–1377 (DINGEAGTWV…AINANIRYSF (267 aa)) form the Autotransporter domain.

In terms of processing, cleaved to release the mature protein from the outer membrane.

Its subcellular location is the periplasm. The protein localises to the secreted. The protein resides in the cell surface. It is found in the cell outer membrane. With respect to regulation, protease activity is inhibited by 3,4-dichloroisocoumarin. Its function is as follows. Interacts with hemoglobin, degrades it and subsequently binds the released heme. Could make heme accessible not only for E.coli, but also for B.fragilis during mixed intra-abdominal infections. Has a role in abscess formation. The protein is Hemoglobin-binding protease hbp autotransporter (hbp) of Escherichia coli.